We begin with the raw amino-acid sequence, 542 residues long: Probable E3 ubiquitin-protein ligase ARI11 (542 aa).

A disordered region spans residues Met-1–Asp-25. The segment covering Asp-10–Tyr-19 has biased composition (acidic residues). Residues Val-135–Lys-342 form a TRIAD supradomain region. 18 residues coordinate Zn(2+): Cys-139, Cys-142, Cys-156, His-158, Cys-161, Cys-164, Cys-184, Cys-189, Cys-228, Cys-233, Cys-251, Cys-253, Cys-258, Cys-261, His-266, Cys-271, Cys-298, and Cys-301. Residues Cys-139–Cys-189 form an RING-type 1 zinc finger. Residues Asp-208–Cys-271 form an IBR-type zinc finger. An RING-type 2; atypical zinc finger spans residues Cys-298–Cys-328. Cys-311 is an active-site residue. Zn(2+) contacts are provided by Cys-316, Cys-320, Cys-325, Cys-328, His-335, and Cys-338.

This sequence belongs to the RBR family. Ariadne subfamily. The cofactor is Zn(2+).

It catalyses the reaction [E2 ubiquitin-conjugating enzyme]-S-ubiquitinyl-L-cysteine + [acceptor protein]-L-lysine = [E2 ubiquitin-conjugating enzyme]-L-cysteine + [acceptor protein]-N(6)-ubiquitinyl-L-lysine.. It functions in the pathway protein modification; protein ubiquitination. In terms of biological role, might act as an E3 ubiquitin-protein ligase, or as part of E3 complex, which accepts ubiquitin from specific E2 ubiquitin-conjugating enzymes and then transfers it to substrates. This chain is Probable E3 ubiquitin-protein ligase ARI11 (ARI11), found in Arabidopsis thaliana (Mouse-ear cress).